A 173-amino-acid polypeptide reads, in one-letter code: Crossover junction endodeoxyribonuclease RuvC (173 aa).

Active-site residues include D8, E67, and D139. Residues D8, E67, and D139 each contribute to the Mg(2+) site.

Belongs to the RuvC family. Homodimer which binds Holliday junction (HJ) DNA. The HJ becomes 2-fold symmetrical on binding to RuvC with unstacked arms; it has a different conformation from HJ DNA in complex with RuvA. In the full resolvosome a probable DNA-RuvA(4)-RuvB(12)-RuvC(2) complex forms which resolves the HJ. Requires Mg(2+) as cofactor.

It is found in the cytoplasm. The catalysed reaction is Endonucleolytic cleavage at a junction such as a reciprocal single-stranded crossover between two homologous DNA duplexes (Holliday junction).. Functionally, the RuvA-RuvB-RuvC complex processes Holliday junction (HJ) DNA during genetic recombination and DNA repair. Endonuclease that resolves HJ intermediates. Cleaves cruciform DNA by making single-stranded nicks across the HJ at symmetrical positions within the homologous arms, yielding a 5'-phosphate and a 3'-hydroxyl group; requires a central core of homology in the junction. The consensus cleavage sequence is 5'-(A/T)TT(C/G)-3'. Cleavage occurs on the 3'-side of the TT dinucleotide at the point of strand exchange. HJ branch migration catalyzed by RuvA-RuvB allows RuvC to scan DNA until it finds its consensus sequence, where it cleaves and resolves the cruciform DNA. The polypeptide is Crossover junction endodeoxyribonuclease RuvC (Salmonella agona (strain SL483)).